A 195-amino-acid chain; its full sequence is CASP-like protein 1B1 (195 aa).

The Cytoplasmic segment spans residues 1–15 (MAKLALAATSGKSCK). Residues 16 to 36 (ILLGLRLLAFSATLSAAIVMG) form a helical membrane-spanning segment. The Extracellular portion of the chain corresponds to 37 to 67 (LNKETETFVVGKVGNTPIKATFTAKFDHTPA). A helical transmembrane segment spans residues 68–88 (FVFFVVANAMVSFHNLLMIAL). Over 89–104 (QIFGGKMEFTGFRLLS) the chain is Cytoplasmic. A helical transmembrane segment spans residues 105–125 (VAILDMLNVTLISAAANAAAF). The Extracellular segment spans residues 126 to 154 (MAEVGKNGNKHARWDKICDRFATYCDHGA). Residues 155–175 (GALIAAFAGVILMLIISAASI) traverse the membrane as a helical segment. Residues 176 to 195 (SRLAQQNKCCSTTASPSVVP) lie on the Cytoplasmic side of the membrane.

The protein belongs to the Casparian strip membrane proteins (CASP) family. In terms of assembly, homodimer and heterodimers.

Its subcellular location is the cell membrane. The sequence is that of CASP-like protein 1B1 from Arabidopsis lyrata subsp. lyrata (Lyre-leaved rock-cress).